We begin with the raw amino-acid sequence, 90 residues long: Barrier-to-autointegration factor A (90 aa).

This sequence belongs to the BAF family. In terms of assembly, homodimer. Interacts with nemp1a and nemp1b. Post-translationally, phosphorylated during S and M phases.

The protein localises to the nucleus. It is found in the chromosome. It localises to the nucleus envelope. The protein resides in the cytoplasm. Its function is as follows. Non-specific DNA-binding protein that plays key roles in mitotic nuclear reassembly, chromatin organization, DNA damage response, gene expression and intrinsic immunity against foreign DNA. Contains two non-specific double-stranded DNA (dsDNA)-binding sites which promote DNA cross-bridging. Plays a key role in nuclear membrane reformation at the end of mitosis by driving formation of a single nucleus in a spindle-independent manner. Transiently cross-bridges anaphase chromosomes via its ability to bridge distant DNA sites, leading to the formation of a dense chromatin network at the chromosome ensemble surface that limits membranes to the surface. Also acts as a negative regulator of innate immune activation by restricting CGAS activity toward self-DNA upon acute loss of nuclear membrane integrity. Outcompetes CGAS for DNA-binding, thereby preventing CGAS activation and subsequent damaging autoinflammatory responses. Also involved in DNA damage response; acts by inhibiting the ADP-ribosyltransferase activity of PARP1. Involved in the recognition of exogenous dsDNA in the cytosol: associates with exogenous dsDNA immediately after its appearance in the cytosol at endosome breakdown and is required to avoid autophagy. The chain is Barrier-to-autointegration factor A (banf1-a) from Xenopus laevis (African clawed frog).